A 92-amino-acid chain; its full sequence is Small ribosomal subunit protein bS20 (92 aa).

The segment covering 1 to 11 has biased composition (basic residues); sequence MANIKSQKKRI. The segment at 1–22 is disordered; sequence MANIKSQKKRIRQNEKARLRNK.

This sequence belongs to the bacterial ribosomal protein bS20 family.

Functionally, binds directly to 16S ribosomal RNA. The sequence is that of Small ribosomal subunit protein bS20 from Thermobifida fusca (strain YX).